The following is a 200-amino-acid chain: Large ribosomal subunit protein uL18 (200 aa).

The protein belongs to the universal ribosomal protein uL18 family. As to quaternary structure, part of the 50S ribosomal subunit. Contacts the 5S and 23S rRNAs.

This is one of the proteins that bind and probably mediate the attachment of the 5S RNA into the large ribosomal subunit, where it forms part of the central protuberance. This chain is Large ribosomal subunit protein uL18, found in Thermococcus sibiricus (strain DSM 12597 / MM 739).